The primary structure comprises 537 residues: O-phosphoserine--tRNA(Cys) ligase (537 aa).

Substrate is bound by residues 186–188 (HMT), 231–233 (SAS), 273–274 (YY), and Asn317.

This sequence belongs to the class-II aminoacyl-tRNA synthetase family. O-phosphoseryl-tRNA(Cys) synthetase subfamily. In terms of assembly, homotetramer. Interacts with SepCysS.

The enzyme catalyses tRNA(Cys) + O-phospho-L-serine + ATP = O-phospho-L-seryl-tRNA(Cys) + AMP + diphosphate. Functionally, catalyzes the attachment of O-phosphoserine (Sep) to tRNA(Cys). This Methanococcus maripaludis (strain C6 / ATCC BAA-1332) protein is O-phosphoserine--tRNA(Cys) ligase.